A 182-amino-acid polypeptide reads, in one-letter code: ATP-dependent protease subunit HslV (182 aa).

The active site involves threonine 10. The Na(+) site is built by alanine 166, cysteine 169, and serine 172.

Belongs to the peptidase T1B family. HslV subfamily. A double ring-shaped homohexamer of HslV is capped on each side by a ring-shaped HslU homohexamer. The assembly of the HslU/HslV complex is dependent on binding of ATP.

The protein resides in the cytoplasm. It carries out the reaction ATP-dependent cleavage of peptide bonds with broad specificity.. With respect to regulation, allosterically activated by HslU binding. In terms of biological role, protease subunit of a proteasome-like degradation complex believed to be a general protein degrading machinery. This is ATP-dependent protease subunit HslV from Rickettsia typhi (strain ATCC VR-144 / Wilmington).